The primary structure comprises 299 residues: AT-hook motif nuclear-localized protein 25 (299 aa).

Disordered regions lie at residues Met-1–Pro-87 and Glu-216–Asn-251. Basic and acidic residues-rich tracts occupy residues His-14–Thr-23 and Asn-33–Ala-42. Composition is skewed to low complexity over residues Thr-44–Ser-72 and Thr-224–Glu-239. A DNA-binding region (a.T hook) is located at residues Arg-63–Lys-75. The region spanning Pro-87–Glu-233 is the PPC domain. Polar residues predominate over residues Val-240 to Asn-251.

As to quaternary structure, homodimer. Interacts with AHL27 and AHL29. Expressed in seedlings, leaves, stems, floral tips and flowers.

It is found in the nucleus. Its function is as follows. Transcription factor that specifically binds AT-rich DNA sequences related to the nuclear matrix attachment regions (MARs). Binds the DNA sequence GNFEI (GA-negative feedback element I) in the GA3OX1 promoter. Binding to GNFEI sequence is required for GA-negative feedback regulation of GA3OX1. The protein is AT-hook motif nuclear-localized protein 25 of Arabidopsis thaliana (Mouse-ear cress).